The primary structure comprises 359 residues: Peptide chain release factor 1 (359 aa).

Gln236 is modified (N5-methylglutamine).

The protein belongs to the prokaryotic/mitochondrial release factor family. Post-translationally, methylated by PrmC. Methylation increases the termination efficiency of RF1.

The protein localises to the cytoplasm. Peptide chain release factor 1 directs the termination of translation in response to the peptide chain termination codons UAG and UAA. This chain is Peptide chain release factor 1, found in Streptococcus pyogenes serotype M12 (strain MGAS2096).